The following is a 150-amino-acid chain: Large ribosomal subunit protein bL9 (150 aa).

The protein belongs to the bacterial ribosomal protein bL9 family.

Binds to the 23S rRNA. The protein is Large ribosomal subunit protein bL9 of Staphylococcus aureus (strain NCTC 8325 / PS 47).